Reading from the N-terminus, the 444-residue chain is Cysteine proteinase 2 (444 aa).

The segment at residues 1-19 (MATSRAALCAVAVVCVVLA) is a signal peptide (or 27). Residues 20 to 124 (AACAPARAIH…HYRKARADLS (105 aa)) constitute a propeptide, activation peptide. Residues Cys-147 and Cys-188 are joined by a disulfide bond. Cys-150 is a catalytic residue. The N-linked (GlcNAc...) asparagine glycan is linked to Asn-228. Catalysis depends on residues His-289 and Asn-309. A glycan (N-linked (GlcNAc...) asparagine) is linked at Asn-372.

It belongs to the peptidase C1 family.

It localises to the lysosome. Its function is as follows. The cysteine proteinases have a potential role in host-parasite interaction and virulence. The sequence is that of Cysteine proteinase 2 (CYS2) from Leishmania pifanoi.